We begin with the raw amino-acid sequence, 112 residues long: MVSKASAMFSRIAPRKARMIADLVRGRDADEAIQLLSFTQKSGAPVLRKIIESAVANAQQAGADIDALFISKATVDKGPNKFNRRWRPRAMGRATRITKGVSHIVIEVDERK.

The protein belongs to the universal ribosomal protein uL22 family. As to quaternary structure, part of the 50S ribosomal subunit.

In terms of biological role, this protein binds specifically to 23S rRNA; its binding is stimulated by other ribosomal proteins, e.g. L4, L17, and L20. It is important during the early stages of 50S assembly. It makes multiple contacts with different domains of the 23S rRNA in the assembled 50S subunit and ribosome. Its function is as follows. The globular domain of the protein is located near the polypeptide exit tunnel on the outside of the subunit, while an extended beta-hairpin is found that lines the wall of the exit tunnel in the center of the 70S ribosome. The sequence is that of Large ribosomal subunit protein uL22 from Sorangium cellulosum (strain So ce56) (Polyangium cellulosum (strain So ce56)).